We begin with the raw amino-acid sequence, 434 residues long: MECLRYLPRLLPRAAQSRSALCMAAVRLSLAACCGRATPLTSGSQKAPSTPRTAGDVYRFRTSDASQATLASVAQVFAVTKFDKEGNVTSFERKKTELYHELALQARDLRFQHVMSITTRNNRIIMRMEYLKAVITPEYLLILDYRNLNLEHWLFRELPSQLAGEGQLVTYPLPFEFRAIEALLQYWINTLQGKLSILQPLILETLDALVDPKHSSVDRSKLHVLLQNGKSLSELETDIKIFKESILELLDEEEMLEELCLTKWSDPHVFEQSSTGIDHAEEMELLLENYYRLADDLSNEARELRVLIDDSQSIIFINLDSHRNVMMRLNLQLTMGTFSLSLFGLMGVAFGMNLESSLEEDHRVFWLITGIMFMGSGLIWRRLLSFLGRQLEAPLPPVMASLPKKTLLADRRMDVKNSLRPEGLGAGRTILASR.

Residues 1–28 constitute a mitochondrion transit peptide; sequence MECLRYLPRLLPRAAQSRSALCMAAVRL. The Mitochondrial matrix portion of the chain corresponds to 54–330; that stretch reads AGDVYRFRTS…SHRNVMMRLN (277 aa). Mg(2+)-binding residues include glutamate 234, threonine 237, aspartate 238, glutamate 303, and aspartate 320. A helical transmembrane segment spans residues 331–350; that stretch reads LQLTMGTFSLSLFGLMGVAF. 2 residues coordinate Mg(2+): glycine 351 and asparagine 353. Positions 351-353 match the GMN motif motif; it reads GMN. The Mitochondrial intermembrane segment spans residues 351–361; the sequence is GMNLESSLEED. The chain crosses the membrane as a helical span at residues 362-392; it reads HRVFWLITGIMFMGSGLIWRRLLSFLGRQLE. Topologically, residues 393–434 are mitochondrial matrix; sequence APLPPVMASLPKKTLLADRRMDVKNSLRPEGLGAGRTILASR.

The protein belongs to the CorA metal ion transporter (MIT) (TC 1.A.35) family. As to quaternary structure, homopentamer.

The protein resides in the mitochondrion inner membrane. Its activity is regulated as follows. May be regulated by calcium ions. Magnesium transporter that mediates the influx of magnesium into the mitochondrial matrix and regulates magnesium metabolism. Also permeable to calcium, sodium and potassium ions. Required for normal expression of the mitochondrial respiratory complex I subunits. May play a role in maintaining the inner mitochondrial membrane potential. This Rattus norvegicus (Rat) protein is Magnesium transporter MRS2 homolog, mitochondrial (Mrs2).